The following is a 126-amino-acid chain: uncharacterized protein (126 aa).

The HTH hxlR-type domain maps to 20–118; the sequence is CPSREVLKHV…WIELNLPEVL (99 aa).

This is an uncharacterized protein from Escherichia coli (strain K12).